A 504-amino-acid polypeptide reads, in one-letter code: MEQFQVYLELNRSRRHDFLYPLIFRESIYALAHGHGLNKSMIFFENQGYGNKFSSLIVKRLILRMDQQKRLISSANDSNQNPVFGHNNNLYSQMVAAGFAVIVEIPFSLRLISYSQGAEVAKSHNLQSIHSIFPFLEDKLSHLNYVLEALIPHPIHLEILVQALRYWVKDASSLHLLRFSLYEYCNLKSFITPKKSISIFNPRLFLFLYNSHACEYEFIFLFLRNQSSHLRSTSSGVFLERIFFYGKIKYLGEVFYNDFQNNLWLFKDPFIHFIRYQGKSILASKDTSLLINKWKYYFVDLWQYYFYLWSQSGRVRINQLSKYSLDFLGYLSSVRLNPSVVRSQMLENSFLIDNAMKTLDTRIPIISLIGSLSKAKFCNTLGHPISKPTWADSPDSDIIDRFVRICRNLSHYHSGSSKKKSLYRIKYILRFSCVKTLARKHKSTVRAFLKKLGSEFLEEFFTETEEEHAFSLIFPRGFFALRKFDRGRIWYLDIICIDALVNHS.

The protein belongs to the intron maturase 2 family. MatK subfamily.

The protein localises to the plastid. The protein resides in the chloroplast. In terms of biological role, usually encoded in the trnK tRNA gene intron. Probably assists in splicing its own and other chloroplast group II introns. The chain is Maturase K from Kokia drynarioides (Hawaiian tree cotton).